A 775-amino-acid polypeptide reads, in one-letter code: GRIP and coiled-coil domain-containing protein 1 (775 aa).

Positions 13-61 (SKKDLLETIETQKKQLLQYQARLKDVVRAYKSLLKEKEALEASIKVLSV) form a coiled coil. Over residues 84-93 (DDRCSTHSED) the composition is skewed to basic and acidic residues. 2 disordered regions span residues 84-153 (DDRC…AGGE) and 614-639 (GLPGRRSPVGGGGPGDPADTSSSDSL). Composition is skewed to low complexity over residues 94 to 110 (STGTATSLDTAASLTST), 133 to 147 (ASWSESGVSSSSGDG), and 629 to 638 (DPADTSSSDS). Positions 153 to 763 (EVDKRLHQLK…PEEKQVIMRL (611 aa)) form a coiled coil. Residues 713-763 (QSREGANLEYLKNIIYRFLTLPDSLGRQQTLTAILTILHFSPEEKQVIMRL) form the GRIP domain.

The protein localises to the cytoplasm. Its subcellular location is the golgi apparatus membrane. Functionally, probably involved in maintaining Golgi structure. The polypeptide is GRIP and coiled-coil domain-containing protein 1 (GCC1) (Homo sapiens (Human)).